Consider the following 275-residue polypeptide: Ovocalyxin-32 (275 aa).

The signal sequence occupies residues 1 to 23 (MPGLRAALPAALLLLSSFPPAAA). 2 Cystatin LXN-type domains span residues 32–131 (PGVM…NKKQ) and 151–255 (TANY…GLED). Positions 254-275 (EDGSGQDSGSAAGTSHETKGNF) are disordered. Residues 256–268 (GSGQDSGSAAGTS) are compositionally biased toward low complexity.

Belongs to the protease inhibitor I47 (latexin) family. Expressed at high levels in the uterine and isthmus regions of the oviduct, and concentrated in the eggshell.

The protein resides in the secreted. Component of the matrix of the eggshell. The sequence is that of Ovocalyxin-32 from Gallus gallus (Chicken).